A 772-amino-acid polypeptide reads, in one-letter code: NAD(P)H-quinone oxidoreductase subunit 5, chloroplastic (772 aa).

Transmembrane regions (helical) follow at residues 8–28 (IWIVPVCPFVASMSVGLGLFF), 39–59 (ICAIISIFLLGIAMFISFSIF), 87–107 (FLIDPLTSTMLVSVTSVGILV), 120–140 (GYVRFFAYLSLFTASMLGLVL), 147–167 (IYIFWELVGMCSYLLIGFWFS), 185–205 (GDFGLLLGILGTYWITGSFDI), 219–239 (NGVNLFLANMCALLLFLGPAA), 258–278 (TPISALIHAATMVAAGIFFVA), 291–311 (MNIISWVGGITALLGATIALA), 395–415 (GTTFLLGTLSLCGIPPFACFW), 425–445 (WIASASLGWIAWCTAGLTGFY), 574–594 (LFSLISLAIPTLFIGFIGVPF), 631–651 (IPSVSIALVGVSISFFIYGPV), 710–730 (WIIDGIVNGIGILSFFGGEGM), and 738–758 (IPSYLFGLIIGNILMLIILII).

This sequence belongs to the complex I subunit 5 family. As to quaternary structure, NDH is composed of at least 16 different subunits, 5 of which are encoded in the nucleus.

The protein localises to the plastid. It is found in the chloroplast thylakoid membrane. The catalysed reaction is a plastoquinone + NADH + (n+1) H(+)(in) = a plastoquinol + NAD(+) + n H(+)(out). It catalyses the reaction a plastoquinone + NADPH + (n+1) H(+)(in) = a plastoquinol + NADP(+) + n H(+)(out). NDH shuttles electrons from NAD(P)H:plastoquinone, via FMN and iron-sulfur (Fe-S) centers, to quinones in the photosynthetic chain and possibly in a chloroplast respiratory chain. The immediate electron acceptor for the enzyme in this species is believed to be plastoquinone. Couples the redox reaction to proton translocation, and thus conserves the redox energy in a proton gradient. The sequence is that of NAD(P)H-quinone oxidoreductase subunit 5, chloroplastic (ndhF) from Angiopteris evecta (Mule's foot fern).